Here is a 338-residue protein sequence, read N- to C-terminus: Ornithine carbamoyltransferase (338 aa).

Residues 56–59 (STRT), arginine 107, and 134–137 (HPTQ) each bind carbamoyl phosphate. L-ornithine contacts are provided by residues asparagine 168, aspartate 232, and 236–237 (SM). Residues 274-275 (CL) and arginine 320 each bind carbamoyl phosphate.

Belongs to the aspartate/ornithine carbamoyltransferase superfamily. OTCase family.

The protein localises to the cytoplasm. The enzyme catalyses carbamoyl phosphate + L-ornithine = L-citrulline + phosphate + H(+). It functions in the pathway amino-acid degradation; L-arginine degradation via ADI pathway; carbamoyl phosphate from L-arginine: step 2/2. Functionally, reversibly catalyzes the transfer of the carbamoyl group from carbamoyl phosphate (CP) to the N(epsilon) atom of ornithine (ORN) to produce L-citrulline. The polypeptide is Ornithine carbamoyltransferase (Buchnera aphidicola subsp. Acyrthosiphon pisum (strain 5A)).